A 112-amino-acid polypeptide reads, in one-letter code: MIPGEFLLADGEIELNADREGRPFQVTNTGDRPIQVGSHYHFHEVNNALDFDRDAALGLRLDIPAGTAVRFEPGQTRTVSLVPFAGERRVYGFQGRVMGPLPTAPDEPEQTS.

This sequence belongs to the urease beta subunit family. Heterotrimer of UreA (gamma), UreB (beta) and UreC (alpha) subunits. Three heterotrimers associate to form the active enzyme.

The protein resides in the cytoplasm. It carries out the reaction urea + 2 H2O + H(+) = hydrogencarbonate + 2 NH4(+). It participates in nitrogen metabolism; urea degradation; CO(2) and NH(3) from urea (urease route): step 1/1. The protein is Urease subunit beta of Thioalkalivibrio sulfidiphilus (strain HL-EbGR7).